The chain runs to 468 residues: Glutamate--tRNA ligase (468 aa).

A 'HIGH' region motif is present at residues 8-18 (PSPTGDPHVGT). Residues 243-247 (KISKR) carry the 'KMSKS' region motif. ATP is bound at residue Lys-246.

This sequence belongs to the class-I aminoacyl-tRNA synthetase family. Glutamate--tRNA ligase type 1 subfamily. As to quaternary structure, monomer.

It is found in the cytoplasm. The enzyme catalyses tRNA(Glu) + L-glutamate + ATP = L-glutamyl-tRNA(Glu) + AMP + diphosphate. Its function is as follows. Catalyzes the attachment of glutamate to tRNA(Glu) in a two-step reaction: glutamate is first activated by ATP to form Glu-AMP and then transferred to the acceptor end of tRNA(Glu). This is Glutamate--tRNA ligase from Thermus thermophilus (strain ATCC BAA-163 / DSM 7039 / HB27).